Here is a 1119-residue protein sequence, read N- to C-terminus: Nuclear matrix constituent protein 1 (1119 aa).

Coiled-coil stretches lie at residues 140 to 226 and 328 to 488; these read LAEL…LYQQ and LQNR…LDER. 4 disordered regions span residues 846–884, 903–974, 989–1015, and 1046–1109; these read LDVEDSQQSDVRAGNRKPGKRAKGRVRRKRSAKEVAEEA, LASA…PTGR, NGALSDPNKGKEKEIDDGGGIGEEIPD, and GINA…EVSM. Composition is skewed to basic residues over residues 859-876 and 920-929; these read GNRKPGKRAKGRVRRKRS and KRTRNSRKRN. Residues 1075-1085 show a composition bias toward polar residues; the sequence is TPEQSRGYQNQ.

The protein belongs to the CRWN family.

It localises to the nucleus matrix. The protein localises to the nucleus lamina. Functionally, architectural component of nuclear structure that plays different roles in controlling nuclear size and morphology. The chain is Nuclear matrix constituent protein 1 from Daucus carota subsp. sativus (Carrot).